The primary structure comprises 626 residues: Solute carrier family 13 member 4 (626 aa).

4 helical membrane-spanning segments follow: residues 13–33, 52–72, 77–97, and 113–133; these read LLLVVCVPLLLLPLPVLHPSS, AVPLGAAALVPAFLYPFFGVL, VAAEYFKNTTLLLVGVICVAA, and VLMAGAKPGMLLLCFMCCTTL. Positions 217 to 228 are enriched in polar residues; sequence SITNPIKTANQH. The segment at 217 to 252 is disordered; it reads SITNPIKTANQHQGKKQHPSQEKPQVLTPSPRKQKL. The next 8 helical transmembrane spans lie at 274-294, 309-329, 372-392, 414-434, 466-486, 499-519, 543-563, and 590-610; these read YSATIGGLTTIIGTSTSLIFL, FGTWFLFSFPISLIMLVVSWF, ISYPEMVTGFFFILMTVLWFT, ATVSVFLGFLLFLIPAKKPCF, IVILVGGGYALASGSKSSGLS, LPPWAVTLLACILVSIVTEFV, PLYTLIPVTMCISFAVMLPVG, and VIGLVIVMVAINTWGVSLFHL.

Belongs to the SLC13A/DASS transporter (TC 2.A.47) family. NADC subfamily. Highly expressed in placenta and testis with intermediate levels in brain and lower levels in heart, thymus and liver.

It localises to the membrane. It carries out the reaction sulfate(out) + 3 Na(+)(out) = sulfate(in) + 3 Na(+)(in). With respect to regulation, transport is inhibited by thiosulfate, phosphate, molybdate, selenate and tungstate. Not inhibited by oxalate, citrate, succinate, phenol red or 4,4'-diisothiocyanostilbene-2,2'-disulfonic acid (DIDS). Sodium:sulfate symporter that mediates sulfate reabsorption in the high endothelial venules (HEV). The chain is Solute carrier family 13 member 4 (SLC13A4) from Homo sapiens (Human).